The primary structure comprises 120 residues: NAD(P)H-quinone oxidoreductase subunit 3, chloroplastic (120 aa).

A run of 3 helical transmembrane segments spans residues 2-22, 64-84, and 88-108; these read FLLY…VIPI, MFAL…PWAL, and ILGV…VLGL.

It belongs to the complex I subunit 3 family. NDH is composed of at least 16 different subunits, 5 of which are encoded in the nucleus.

It localises to the plastid. It is found in the chloroplast thylakoid membrane. It carries out the reaction a plastoquinone + NADH + (n+1) H(+)(in) = a plastoquinol + NAD(+) + n H(+)(out). The enzyme catalyses a plastoquinone + NADPH + (n+1) H(+)(in) = a plastoquinol + NADP(+) + n H(+)(out). Its function is as follows. NDH shuttles electrons from NAD(P)H:plastoquinone, via FMN and iron-sulfur (Fe-S) centers, to quinones in the photosynthetic chain and possibly in a chloroplast respiratory chain. The immediate electron acceptor for the enzyme in this species is believed to be plastoquinone. Couples the redox reaction to proton translocation, and thus conserves the redox energy in a proton gradient. In Oenothera argillicola (Appalachian evening primrose), this protein is NAD(P)H-quinone oxidoreductase subunit 3, chloroplastic.